Reading from the N-terminus, the 579-residue chain is Pre-mRNA-processing factor 17 (579 aa).

Low complexity predominate over residues 1 to 19; it reads MSAAIAALAASYGSGSGSE. Disordered stretches follow at residues 1–47 and 204–237; these read MSAA…PSSK and DVAK…PGEE. Position 46 is a phosphoserine (Ser46). WD repeat units follow at residues 286–326, 330–369, 371–413, 416–455, 459–498, 504–545, and 548–578; these read GHTK…RCLR, GHSK…CISR, TNRK…IVQE, RHLG…DFKY, PSMH…RLNK, GHMV…LYSR, and AHDK…IKLW.

Component of the pre-catalytic and catalytic spliceosome complexes. Component of the postcatalytic spliceosome P complex. Interacts with PPIL1; this interaction leads to CDC40 isomerization. In terms of processing, undergoes isomerization of the peptide bond between Gly-94 and Pro-95. The reaction is catalyzed by PPIL1.

The protein resides in the nucleus. It localises to the nucleus speckle. Functionally, required for pre-mRNA splicing as component of the activated spliceosome. Plays an important role in embryonic brain development; this function does not require proline isomerization. This Homo sapiens (Human) protein is Pre-mRNA-processing factor 17 (CDC40).